The following is a 545-amino-acid chain: CTP synthase (545 aa).

The interval 1 to 266 is amidoligase domain; sequence MATNYIFVTG…DSFVCDRFRL (266 aa). Serine 14 is a CTP binding site. A UTP-binding site is contributed by serine 14. ATP contacts are provided by residues 15–20 and aspartate 72; that span reads SLGKGI. Mg(2+)-binding residues include aspartate 72 and glutamate 140. Residues 147–149, 187–192, and lysine 223 each bind CTP; these read DIE and KTKPTQ. Residues 187–192 and lysine 223 contribute to the UTP site; that span reads KTKPTQ. 239–241 lines the ATP pocket; the sequence is KDV. The region spanning 291-542 is the Glutamine amidotransferase type-1 domain; the sequence is TIGMVGKYVE…VAAAKAYQDS (252 aa). Glycine 352 is a binding site for L-glutamine. Residue cysteine 379 is the Nucleophile; for glutamine hydrolysis of the active site. L-glutamine contacts are provided by residues 380–383, glutamate 403, and arginine 470; that span reads LGMQ. Catalysis depends on residues histidine 515 and glutamate 517.

It belongs to the CTP synthase family. In terms of assembly, homotetramer.

The catalysed reaction is UTP + L-glutamine + ATP + H2O = CTP + L-glutamate + ADP + phosphate + 2 H(+). The enzyme catalyses L-glutamine + H2O = L-glutamate + NH4(+). It catalyses the reaction UTP + NH4(+) + ATP = CTP + ADP + phosphate + 2 H(+). The protein operates within pyrimidine metabolism; CTP biosynthesis via de novo pathway; CTP from UDP: step 2/2. Its activity is regulated as follows. Allosterically activated by GTP, when glutamine is the substrate; GTP has no effect on the reaction when ammonia is the substrate. The allosteric effector GTP functions by stabilizing the protein conformation that binds the tetrahedral intermediate(s) formed during glutamine hydrolysis. Inhibited by the product CTP, via allosteric rather than competitive inhibition. Its function is as follows. Catalyzes the ATP-dependent amination of UTP to CTP with either L-glutamine or ammonia as the source of nitrogen. Regulates intracellular CTP levels through interactions with the four ribonucleotide triphosphates. The chain is CTP synthase from Haemophilus ducreyi (strain 35000HP / ATCC 700724).